The primary structure comprises 346 residues: N-acetyl-gamma-glutamyl-phosphate reductase (346 aa).

Cysteine 149 is a catalytic residue.

This sequence belongs to the NAGSA dehydrogenase family. Type 1 subfamily.

It is found in the cytoplasm. It carries out the reaction N-acetyl-L-glutamate 5-semialdehyde + phosphate + NADP(+) = N-acetyl-L-glutamyl 5-phosphate + NADPH + H(+). It functions in the pathway amino-acid biosynthesis; L-arginine biosynthesis; N(2)-acetyl-L-ornithine from L-glutamate: step 3/4. Catalyzes the NADPH-dependent reduction of N-acetyl-5-glutamyl phosphate to yield N-acetyl-L-glutamate 5-semialdehyde. In Geotalea daltonii (strain DSM 22248 / JCM 15807 / FRC-32) (Geobacter daltonii), this protein is N-acetyl-gamma-glutamyl-phosphate reductase.